The sequence spans 253 residues: Imidazole glycerol phosphate synthase subunit HisF (253 aa).

Residues Asp11 and Asp130 contribute to the active site.

This sequence belongs to the HisA/HisF family. As to quaternary structure, heterodimer of HisH and HisF.

The protein resides in the cytoplasm. It carries out the reaction 5-[(5-phospho-1-deoxy-D-ribulos-1-ylimino)methylamino]-1-(5-phospho-beta-D-ribosyl)imidazole-4-carboxamide + L-glutamine = D-erythro-1-(imidazol-4-yl)glycerol 3-phosphate + 5-amino-1-(5-phospho-beta-D-ribosyl)imidazole-4-carboxamide + L-glutamate + H(+). It functions in the pathway amino-acid biosynthesis; L-histidine biosynthesis; L-histidine from 5-phospho-alpha-D-ribose 1-diphosphate: step 5/9. Its function is as follows. IGPS catalyzes the conversion of PRFAR and glutamine to IGP, AICAR and glutamate. The HisF subunit catalyzes the cyclization activity that produces IGP and AICAR from PRFAR using the ammonia provided by the HisH subunit. The sequence is that of Imidazole glycerol phosphate synthase subunit HisF from Ruegeria sp. (strain TM1040) (Silicibacter sp.).